We begin with the raw amino-acid sequence, 259 residues long: GTP cyclohydrolase FolE2 (259 aa).

The protein belongs to the GTP cyclohydrolase IV family.

It carries out the reaction GTP + H2O = 7,8-dihydroneopterin 3'-triphosphate + formate + H(+). It functions in the pathway cofactor biosynthesis; 7,8-dihydroneopterin triphosphate biosynthesis; 7,8-dihydroneopterin triphosphate from GTP: step 1/1. Functionally, converts GTP to 7,8-dihydroneopterin triphosphate. This is GTP cyclohydrolase FolE2 from Halorhodospira halophila (strain DSM 244 / SL1) (Ectothiorhodospira halophila (strain DSM 244 / SL1)).